We begin with the raw amino-acid sequence, 728 residues long: 1,4-alpha-glucan branching enzyme GlgB (728 aa).

Asp-405 serves as the catalytic Nucleophile. Residue Glu-458 is the Proton donor of the active site.

The protein belongs to the glycosyl hydrolase 13 family. GlgB subfamily. In terms of assembly, monomer.

The enzyme catalyses Transfers a segment of a (1-&gt;4)-alpha-D-glucan chain to a primary hydroxy group in a similar glucan chain.. The protein operates within glycan biosynthesis; glycogen biosynthesis. Catalyzes the formation of the alpha-1,6-glucosidic linkages in glycogen by scission of a 1,4-alpha-linked oligosaccharide from growing alpha-1,4-glucan chains and the subsequent attachment of the oligosaccharide to the alpha-1,6 position. This is 1,4-alpha-glucan branching enzyme GlgB from Klebsiella pneumoniae subsp. pneumoniae (strain ATCC 700721 / MGH 78578).